A 620-amino-acid chain; its full sequence is Probable translation initiation factor IF-2 (620 aa).

The segment covering 1–10 has biased composition (acidic residues); sequence MSDTDADADT. The disordered stretch occupies residues 1 to 29; the sequence is MSDTDADADTDAVSTTETSMNADANANAD. Residues 11–29 show a composition bias toward low complexity; sequence DAVSTTETSMNADANANAD. Residues 33–248 enclose the tr-type G domain; the sequence is LRTPIVAVLG…VLMGLSQRYM (216 aa). A G1 region spans residues 42–49; sequence GHVDHGKT. Residue 42-49 participates in GTP binding; it reads GHVDHGKT. A G2 region spans residues 67–71; the sequence is AITQH. The interval 104-107 is G3; the sequence is DTPG. GTP-binding positions include 104–108 and 158–161; these read DTPGH and NKVD. A G4 region spans residues 158 to 161; the sequence is NKVD. Residues 162-183 show a composition bias toward polar residues; the sequence is TTPGWTPTDGSPIQPTYESQPS. The tract at residues 162-185 is disordered; sequence TTPGWTPTDGSPIQPTYESQPSAA. The tract at residues 226–228 is G5; that stretch reads SAI.

This sequence belongs to the TRAFAC class translation factor GTPase superfamily. Classic translation factor GTPase family. IF-2 subfamily.

In terms of biological role, function in general translation initiation by promoting the binding of the formylmethionine-tRNA to ribosomes. Seems to function along with eIF-2. This chain is Probable translation initiation factor IF-2, found in Haloquadratum walsbyi (strain DSM 16790 / HBSQ001).